The chain runs to 348 residues: Phosphoribosylformylglycinamidine cyclo-ligase (348 aa).

It belongs to the AIR synthase family.

The protein resides in the cytoplasm. It catalyses the reaction 2-formamido-N(1)-(5-O-phospho-beta-D-ribosyl)acetamidine + ATP = 5-amino-1-(5-phospho-beta-D-ribosyl)imidazole + ADP + phosphate + H(+). The protein operates within purine metabolism; IMP biosynthesis via de novo pathway; 5-amino-1-(5-phospho-D-ribosyl)imidazole from N(2)-formyl-N(1)-(5-phospho-D-ribosyl)glycinamide: step 2/2. The chain is Phosphoribosylformylglycinamidine cyclo-ligase from Cereibacter sphaeroides (strain ATCC 17029 / ATH 2.4.9) (Rhodobacter sphaeroides).